The sequence spans 425 residues: Acyl-lipid (8-3)-desaturase (425 aa).

The segment at 1-25 is disordered; the sequence is MPPRDSYSYAAPPSAQLHEVDTPQE. In terms of domain architecture, Cytochrome b5 heme-binding spans 18–93; it reads HEVDTPQEHD…SRPVHKGYSP (76 aa). 2 residues coordinate heme: histidine 47 and histidine 69. A helical membrane pass occupies residues 134 to 154; sequence VAGAALIWHGYTFAGIAMLGV. The Histidine box-1 signature appears at 164-168; it reads HEGGH. A helical transmembrane segment spans residues 175–197; the sequence is IAFDRAIQVACYGLGCGMSGAWW. Residues 201–206 carry the Histidine box-2 motif; that stretch reads HNKHHA. The next 2 membrane-spanning stretches (helical) occupy residues 241-261 and 297-317; these read WLSM…ALGW and GAGY…MYIF. Residues 365–369 carry the Histidine box-3 motif; it reads QIEHH.

This sequence belongs to the fatty acid desaturase type 1 family. Requires Fe(2+) as cofactor.

The protein resides in the membrane. It carries out the reaction an (8Z,11Z,14Z)-icosatrienoyl-containing glycerolipid + 2 Fe(II)-[cytochrome b5] + O2 + 2 H(+) = (5Z,8Z,11Z,14Z)-eicosatetraenoyl-containing glycerolipid + 2 Fe(III)-[cytochrome b5] + 2 H2O. The enzyme catalyses an (8Z,11Z,14Z,17Z)-eicosatetraenoyl-containing glycerolipid + 2 Fe(II)-[cytochrome b5] + O2 + 2 H(+) = a (5Z,8Z,11Z,14Z,17Z)-eicosapentaenoyl-containing glycerolipid + 2 Fe(III)-[cytochrome b5] + 2 H2O. Its function is as follows. Fatty acid desaturase that introduces a cis double bond at the 5-position in 20-carbon polyunsaturated fatty acids incorporated in a glycerolipid that contain a Delta(8) double bond. This is Acyl-lipid (8-3)-desaturase from Rebecca salina (Marine microalga).